Reading from the N-terminus, the 275-residue chain is Holocytochrome c-type synthase (275 aa).

Disordered stretches follow at residues 1 to 59 (MGLS…KTNS) and 83 to 102 (KENLDPSNLMPPPNQTPAPD). The N-myristoyl glycine moiety is linked to residue glycine 2. The segment covering 9–28 (AASTVQTSTPAASDHQTAAP) has biased composition (polar residues). HRM repeat units follow at residues 31-36 (GCPMHE) and 41-46 (GCPVSA). Residues 48–59 (PSDSTCGSKTNS) show a composition bias toward polar residues. Residues 91 to 102 (LMPPPNQTPAPD) show a composition bias toward pro residues.

Belongs to the cytochrome c-type heme lyase family.

Its subcellular location is the mitochondrion inner membrane. The protein resides in the membrane. It carries out the reaction holo-[cytochrome c] = apo-[cytochrome c] + heme b. Lyase that catalyzes the covalent linking of the heme group to the cytochrome C apoprotein to produce the mature functional cytochrome. The polypeptide is Holocytochrome c-type synthase (Bos taurus (Bovine)).